A 675-amino-acid polypeptide reads, in one-letter code: Regulator of G-protein signaling 9 (675 aa).

The region spanning 30–105 is the DEP domain; sequence PETGVRMHNQ…PDSSLYRFQT (76 aa). In terms of domain architecture, G protein gamma spans 222–283; sequence VRKEIMYYQQ…DTQFWDLNAK (62 aa). The RGS domain occupies 299–414; that stretch reads NFSELIRDPK…LKSPIYKEML (116 aa). Disordered stretches follow at residues 524–571 and 637–662; these read RVAL…PPKA and DSGT…EKEV. The segment covering 542–551 has biased composition (polar residues); it reads SGANSGPSVT. Composition is skewed to basic and acidic residues over residues 552 to 562 and 646 to 662; these read ENREPSADHSR and DDPR…EKEV.

Heterodimer with GNB5. Interacts with RGS7BP, leading to regulate the subcellular location of the heterodimer formed with GNB5. Component of the RGS9-1-Gbeta5 complex composed of RGS9 (RGS9-1), Gbeta5 (GNB5) and RGS9BP. Interacts with PDE6G and GNAT1. Retinal isoform 1 is light-dependent phosphorylated at 'Ser-475'. Phosphorylation is decreased by light exposition. Interaction with RGS9BP is decreased when isoform 1 is phosphorylated at 'Ser-475'. Isoform 1 is expressed in photoreceptor outer segments. Isoform 2 is expressed in brain striatum.

The protein resides in the membrane. Inhibits signal transduction by increasing the GTPase activity of G protein alpha subunits thereby driving them into their inactive GDP-bound form. Binds to GNAT1. Involved in phototransduction; key element in the recovery phase of visual transduction. The protein is Regulator of G-protein signaling 9 (Rgs9) of Mus musculus (Mouse).